The primary structure comprises 256 residues: NAP1-related protein 1 (256 aa).

Residues 23 to 64 are a coiled coil; the sequence is IDAELVLSIEKLQEIQDDLEKINEKASDEVLEVEQKYNVIRK. The interval 220 to 256 is disordered; the sequence is LTYFNNDADEEDFDGDDDGDEEGEEDDDDEEEEDGEE. Positions 226-256 are enriched in acidic residues; the sequence is DADEEDFDGDDDGDEEGEEDDDDEEEEDGEE.

The protein belongs to the nucleosome assembly protein (NAP) family. As to quaternary structure, can form homomeric and heteromeric protein complexes with NRP2. Binds histones H2A and H2B and associates with chromatin in vivo. Ubiquitous.

It is found in the cytoplasm. It localises to the nucleus. In terms of biological role, acts as a histone H2A/H2B chaperone in nucleosome assembly, playing a critical role for the correct expression of genes involved in root proliferation and patterning. Required with NRP2 for the maintenance of cell proliferation and differentiation in postembryonic root growth. Involved in both intramolecular and intermolecular somatic homologous recombination. This chain is NAP1-related protein 1 (NRP1), found in Arabidopsis thaliana (Mouse-ear cress).